The sequence spans 752 residues: Glutamate carboxypeptidase 2 (752 aa).

The Cytoplasmic portion of the chain corresponds to 1–22; the sequence is MWNALQDRDSAEVLGHRQRWLR. Ser10 carries the post-translational modification Phosphoserine. The helical; Signal-anchor for type II membrane protein transmembrane segment at 23–44 threads the bilayer; it reads VGTLVLALTGTFLIGFLFGWFI. The Extracellular segment spans residues 45–752; that stretch reads KPSNEATGNV…AAAETLREVA (708 aa). Asn78, Asn123, and Asn155 each carry an N-linked (GlcNAc...) asparagine glycan. Substrate is bound by residues Arg212 and Asn259. Ca(2+)-binding residues include Thr271 and Tyr274. Positions 276-589 are NAALADase; sequence ANEHAYRHEL…QVRGAMVFEL (314 aa). An N-linked (GlcNAc...) asparagine glycan is attached at Asn338. Zn(2+) is bound by residues His379 and Asp389. Glu426 is a binding site for substrate. Catalysis depends on Glu426, which acts as the Nucleophile; for NAALADase activity. Position 427 (Glu427) interacts with Zn(2+). The Ca(2+) site is built by Glu435 and Glu438. Residue Asp455 participates in Zn(2+) binding. Asn461 and Asn478 each carry an N-linked (GlcNAc...) asparagine glycan. Residues 519–520, Asn521, 536–538, Tyr554, and 554–555 each bind substrate; these read SG, RAR, and YH. Position 555 (His555) interacts with Zn(2+). Residue Asn615 is glycosylated (N-linked (GlcNAc...) asparagine). Ser630 (charge relay system) is an active-site residue. N-linked (GlcNAc...) asparagine glycosylation is present at Asn640. Catalysis depends on charge relay system residues Asp668 and His691. 701 to 702 lines the substrate pocket; the sequence is KY. The N-linked (GlcNAc...) asparagine glycan is linked to Asn722.

Belongs to the peptidase M28 family. M28B subfamily. As to quaternary structure, homodimer. Requires Zn(2+) as cofactor. In terms of tissue distribution, expressed predominantly in the hippocampal region of the brain and in kidney. Lower levels in the ovary, testis and mandibular gland.

The protein localises to the cell membrane. It catalyses the reaction Release of an unsubstituted, C-terminal glutamyl residue, typically from Ac-Asp-Glu or folylpoly-gamma-glutamates.. With respect to regulation, the NAALADase and folate hydrolase activities are inhibited by quisqualic acid. In terms of biological role, has both folate hydrolase and N-acetylated-alpha-linked-acidic dipeptidase (NAALADase) activity. Has a preference for tri-alpha-glutamate peptides. In the intestine, required for the uptake of folate. In the brain, modulates excitatory neurotransmission through the hydrolysis of the neuropeptide, N-aceylaspartylglutamate (NAAG), thereby releasing glutamate. Its function is as follows. Also exhibits a dipeptidyl-peptidase IV type activity. In vitro, cleaves Gly-Pro-AMC. The polypeptide is Glutamate carboxypeptidase 2 (Folh1) (Mus musculus (Mouse)).